The sequence spans 174 residues: Large ribosomal subunit protein uL18 (174 aa).

This sequence belongs to the universal ribosomal protein uL18 family. In terms of assembly, part of the 50S ribosomal subunit. Contacts the 5S and 23S rRNAs.

Functionally, this is one of the proteins that bind and probably mediate the attachment of the 5S RNA into the large ribosomal subunit, where it forms part of the central protuberance. The protein is Large ribosomal subunit protein uL18 of Methanocorpusculum labreanum (strain ATCC 43576 / DSM 4855 / Z).